The primary structure comprises 489 residues: Rhamnulokinase (489 aa).

Residue 13–17 (ASSGR) participates in ATP binding. Cys68 and Cys222 are joined by a disulfide. Substrate is bound by residues Gly83 and 236–238 (HDT). Asp237 (proton acceptor) is an active-site residue. Thr259 contributes to the ATP binding site. Asn296 is a substrate binding site. ATP is bound at residue Gln304. Cysteines 353 and 370 form a disulfide. Gly402 provides a ligand contact to ATP. The cysteines at positions 413 and 417 are disulfide-linked.

The protein belongs to the rhamnulokinase family. Monomer. Mg(2+) serves as cofactor.

The enzyme catalyses L-rhamnulose + ATP = L-rhamnulose 1-phosphate + ADP + H(+). It functions in the pathway carbohydrate degradation; L-rhamnose degradation; glycerone phosphate from L-rhamnose: step 2/3. Its function is as follows. Involved in the catabolism of L-rhamnose (6-deoxy-L-mannose). Catalyzes the transfer of the gamma-phosphate group from ATP to the 1-hydroxyl group of L-rhamnulose to yield L-rhamnulose 1-phosphate. This chain is Rhamnulokinase, found in Escherichia fergusonii (strain ATCC 35469 / DSM 13698 / CCUG 18766 / IAM 14443 / JCM 21226 / LMG 7866 / NBRC 102419 / NCTC 12128 / CDC 0568-73).